The following is a 277-amino-acid chain: Myelin proteolipid protein (277 aa).

Over 2–9 (GLLECCAR) the chain is Cytoplasmic. 3 S-palmitoyl cysteine lipidation sites follow: C6, C7, and C10. The chain crosses the membrane as a helical span at residues 10–36 (CLVGAPFASLVATGLCFFGVALFCGCG). Topologically, residues 37 to 63 (HEALTGTEKLIETYFSKNYQDYEYLIN) are extracellular. A helical membrane pass occupies residues 64–88 (VIHAFQYVIYGTASFFFLYGALLLA). Residues 89 to 151 (EGFYTTGAVR…LGKWLGHPDK (63 aa)) are Cytoplasmic-facing. A lipid anchor (S-palmitoyl cysteine) is attached at C109. The residue at position 114 (S114) is a Phosphoserine. Phosphothreonine is present on residues T116 and T118. 2 S-palmitoyl cysteine lipidation sites follow: C139 and C141. Residues 152-177 (FVGITYALTVVWLLVFACSAVPVYIY) traverse the membrane as a helical segment. Over 178–233 (FNTWTTCQSIAFPSKTSASIGSLCADARMYGVLPWNAFPGKVCGSNLLSICKTAEF) the chain is Extracellular. 2 disulfide bridges follow: C184–C228 and C201–C220. S199 carries O-palmitoyl serine lipidation. The helical transmembrane segment at 234–260 (QMTFHLFIAAFVGAAATLVSLLTFMIA) threads the bilayer. Residues 261–277 (ATYNFAVLKLMGRGTKF) lie on the Cytoplasmic side of the membrane.

It belongs to the myelin proteolipid protein family. As to quaternary structure, interacts with MAL.

It localises to the cell membrane. The protein localises to the myelin membrane. Its function is as follows. This is the major myelin protein from the central nervous system. It plays an important role in the formation or maintenance of the multilamellar structure of myelin. The protein is Myelin proteolipid protein (Plp1) of Mus musculus (Mouse).